The sequence spans 393 residues: Envelope glycoprotein D (393 aa).

A signal peptide spans 1 to 25 (MGRLTSGVGTAALLVVAVGLRVVCA). The tract at residues 25–57 (AKYALADPSLKMADPNRFRGKNLPVLDQLTDPP) is interaction with TNFRSF14. Residues 26–340 (KYALADPSLK…HAPAAPSNPG (315 aa)) are Virion surface-facing. Position 64 (His64) interacts with Zn(2+). Cystine bridges form between Cys91–Cys214, Cys131–Cys227, and Cys143–Cys152. 2 N-linked (GlcNAc...) asparagine; by host glycosylation sites follow: Asn119 and Asn146. Asp240 provides a ligand contact to Zn(2+). Residues 261–305 (LKIAGWHGPKPPYTSTLLPPELSDTTNATQPELVPEDPEDSALLE) form a profusion region. The segment covering 274 to 290 (TSTLLPPELSDTTNATQ) has biased composition (polar residues). A disordered region spans residues 274–301 (TSTLLPPELSDTTNATQPELVPEDPEDS). Residue Asn287 is glycosylated (N-linked (GlcNAc...) asparagine; by host). Residues 341 to 361 (LIIGALAGSTLAVLVIGGIAF) traverse the membrane as a helical segment. At 362–393 (WVRRRAQMAPKRLRLPHIRDDDAPPSHQPLFY) the chain is on the intravirion side.

The protein belongs to the herpesviridae glycoprotein D family. Homodimer. Interacts with host receptor TNFRSF14. Interacts with host receptor NECTIN1. Interacts with host receptor NECTIN2. Interacts (via profusion domain) with gB; this interaction occurs in the absence of gH/gL. Interacts (via profusion domain) with gH/gL heterodimer; this interaction occurs in the absence of gB. Associates with the gB-gH/gL-gD complex. Interacts (via C-terminus) with UL11 tegument protein.

It localises to the virion membrane. Its function is as follows. Envelope glycoprotein that binds to the host cell entry receptors NECTIN1 and TNFRSF14/HVEM, promoting the virus entry into host cells. May trigger fusion with host membrane, by recruiting the fusion machinery composed of gB and gH/gL. The chain is Envelope glycoprotein D (gD) from Human herpesvirus 2 (strain HG52) (HHV-2).